We begin with the raw amino-acid sequence, 323 residues long: Tetraacyldisaccharide 4'-kinase (323 aa).

56-63 (TVGGVGKT) serves as a coordination point for ATP.

It belongs to the LpxK family.

It catalyses the reaction a lipid A disaccharide + ATP = a lipid IVA + ADP + H(+). It participates in glycolipid biosynthesis; lipid IV(A) biosynthesis; lipid IV(A) from (3R)-3-hydroxytetradecanoyl-[acyl-carrier-protein] and UDP-N-acetyl-alpha-D-glucosamine: step 6/6. Transfers the gamma-phosphate of ATP to the 4'-position of a tetraacyldisaccharide 1-phosphate intermediate (termed DS-1-P) to form tetraacyldisaccharide 1,4'-bis-phosphate (lipid IVA). This is Tetraacyldisaccharide 4'-kinase from Legionella pneumophila (strain Corby).